The chain runs to 136 residues: MGARKKISAEKRKEALKTMYFAKLQNVPTSPRKMRLVADMIRGMEVNRALGVLKFSSKEAAARVEKLLRSAIANWEQKNERKAESGELFVTQIFVDGGATLKRMRPAPQGRGYRIRKRSNHVTLFVGAKSNNEDQN.

This sequence belongs to the universal ribosomal protein uL22 family. Part of the 50S ribosomal subunit.

In terms of biological role, this protein binds specifically to 23S rRNA; its binding is stimulated by other ribosomal proteins, e.g. L4, L17, and L20. It is important during the early stages of 50S assembly. It makes multiple contacts with different domains of the 23S rRNA in the assembled 50S subunit and ribosome. The globular domain of the protein is located near the polypeptide exit tunnel on the outside of the subunit, while an extended beta-hairpin is found that lines the wall of the exit tunnel in the center of the 70S ribosome. The polypeptide is Large ribosomal subunit protein uL22 (Bacteroides thetaiotaomicron (strain ATCC 29148 / DSM 2079 / JCM 5827 / CCUG 10774 / NCTC 10582 / VPI-5482 / E50)).